A 491-amino-acid polypeptide reads, in one-letter code: Probable V-type proton ATPase subunit B 1 (491 aa).

ATP is bound at residue Arg-380.

This sequence belongs to the ATPase alpha/beta chains family. V-ATPase is a heteromultimeric enzyme made up of two complexes: the ATP-hydrolytic V1 complex and the proton translocation V0 complex. The V1 complex consists of three catalytic AB heterodimers that form a heterohexamer, three peripheral stalks each consisting of EG heterodimers, one central rotor including subunits D and F, and the regulatory subunits C and H. The proton translocation complex V0 consists of the proton transport subunit a, a ring of proteolipid subunits c9c'', rotary subunit d, subunits e and f, and the accessory subunits vah-19/Ac45 and vah-20/PRR.

Non-catalytic subunit of the V1 complex of vacuolar(H+)-ATPase (V-ATPase), a multisubunit enzyme composed of a peripheral complex (V1) that hydrolyzes ATP and a membrane integral complex (V0) that translocates protons. V-ATPase is responsible for acidifying and maintaining the pH of intracellular compartments and in some cell types, is targeted to the plasma membrane, where it is responsible for acidifying the extracellular environment. Essential for the proper assembly and activity of V-ATPase. Required maternally for early embryogenesis and zygotically during morphogenesis. Specifically, involved in the clearance of apoptotic cell corpses in embryos. Also, during embryonic development, the V-ATPase is required to repress fusion of epidermal cells probably by negatively regulating eff-1-mediated cell fusion. In neurons, required for necrotic cell death by promoting intracellular acidification. Required for cell death induced by hypoxia. Required for acidification of synaptic vesicles and the release of neurotransmitters from adult neurons. The polypeptide is Probable V-type proton ATPase subunit B 1 (Caenorhabditis briggsae).